Here is a 388-residue protein sequence, read N- to C-terminus: Protein DJ-1 homolog D (388 aa).

PfpI endopeptidase domains follow at residues 5–190 and 198–383; these read RTVL…KALG and KRIL…ALLG. C120 (nucleophile) is an active-site residue. Position 120 is a cysteine sulfenic acid (-SOH) (C120). The active site involves H121. C313 (nucleophile) is an active-site residue. C313 is modified (cysteine sulfinic acid (-SO2H)). H314 is an active-site residue.

This sequence belongs to the peptidase C56 family. As to quaternary structure, homotrimer. Post-translationally, cys-120 and Cys-313 are oxidized to sulfinic acid.

The catalysed reaction is (R)-S-lactoylglutathione = methylglyoxal + glutathione. In terms of biological role, possesses glyoxalase I activity. Catalyzes the conversion of hemimercaptal, formed from methylglyoxal and glutathione, to S-lactoylglutathione. May be involved in oxidative stress response. This chain is Protein DJ-1 homolog D (DJ1D), found in Arabidopsis thaliana (Mouse-ear cress).